Here is a 154-residue protein sequence, read N- to C-terminus: 6,7-dimethyl-8-ribityllumazine synthase (154 aa).

Residues Phe21, 55–57 (AFE), and 79–81 (CVI) contribute to the 5-amino-6-(D-ribitylamino)uracil site. 84-85 (AT) is a (2S)-2-hydroxy-3-oxobutyl phosphate binding site. Residue His87 is the Proton donor of the active site. Phe112 serves as a coordination point for 5-amino-6-(D-ribitylamino)uracil. Arg126 serves as a coordination point for (2S)-2-hydroxy-3-oxobutyl phosphate.

Belongs to the DMRL synthase family. As to quaternary structure, forms an icosahedral capsid composed of 60 subunits, arranged as a dodecamer of pentamers.

It catalyses the reaction (2S)-2-hydroxy-3-oxobutyl phosphate + 5-amino-6-(D-ribitylamino)uracil = 6,7-dimethyl-8-(1-D-ribityl)lumazine + phosphate + 2 H2O + H(+). It functions in the pathway cofactor biosynthesis; riboflavin biosynthesis; riboflavin from 2-hydroxy-3-oxobutyl phosphate and 5-amino-6-(D-ribitylamino)uracil: step 1/2. Catalyzes the formation of 6,7-dimethyl-8-ribityllumazine by condensation of 5-amino-6-(D-ribitylamino)uracil with 3,4-dihydroxy-2-butanone 4-phosphate. This is the penultimate step in the biosynthesis of riboflavin. This Staphylococcus aureus (strain Mu50 / ATCC 700699) protein is 6,7-dimethyl-8-ribityllumazine synthase.